Here is a 379-residue protein sequence, read N- to C-terminus: MSTVFPEDSVGLVVPQTARFDEPLALACGRSLASYELVYETYGTLNASASNAVLICHALSGHHHAAGYHAATDRKPGWWDSCIGPGKPIDTNRFFVVSLNNLGGCNGSTGPSSVNPATGKPYGAEFPVLTVEDWVHSQARLADRLGIQQWAAIVGGSLGGMQALQWTMTYPERVRHCVDIASAPKLSAQNIAFNEVARQAILTDPEFHGGSFQDQGVIPKRGLMLARMVGHITYLSDDSMGEKFGRELKSDKLNYDFHSVEFQVESYLRYQGEEFSGRFDANTYLLMTKALDYFDPAATHGGDLAATLAHVKADYCIMSFTTDWRFSPARSREIVDALMAARKNVCYLEIDSPYGHDAFLIPTPRYMQGFSNYMNRIAI.

Positions 51–360 constitute an AB hydrolase-1 domain; sequence NAVLICHALS…DSPYGHDAFL (310 aa). The Nucleophile role is filled by serine 157. Arginine 227 contacts substrate. Residues aspartate 323 and histidine 356 contribute to the active site. A substrate-binding site is contributed by aspartate 357.

It belongs to the AB hydrolase superfamily. MetX family. As to quaternary structure, homodimer.

The protein localises to the cytoplasm. It catalyses the reaction L-homoserine + succinyl-CoA = O-succinyl-L-homoserine + CoA. Its pathway is amino-acid biosynthesis; L-methionine biosynthesis via de novo pathway; O-succinyl-L-homoserine from L-homoserine: step 1/1. In terms of biological role, transfers a succinyl group from succinyl-CoA to L-homoserine, forming succinyl-L-homoserine. This Pseudomonas putida (strain ATCC 700007 / DSM 6899 / JCM 31910 / BCRC 17059 / LMG 24140 / F1) protein is Homoserine O-succinyltransferase.